The primary structure comprises 369 residues: Phosphate acyltransferase (369 aa).

Residues 342-369 form a disordered region; it reads ASRAPNSQTAGGERAAAVPQSAQLRMDS.

This sequence belongs to the PlsX family. As to quaternary structure, homodimer. Probably interacts with PlsY.

Its subcellular location is the cytoplasm. It carries out the reaction a fatty acyl-[ACP] + phosphate = an acyl phosphate + holo-[ACP]. The protein operates within lipid metabolism; phospholipid metabolism. Functionally, catalyzes the reversible formation of acyl-phosphate (acyl-PO(4)) from acyl-[acyl-carrier-protein] (acyl-ACP). This enzyme utilizes acyl-ACP as fatty acyl donor, but not acyl-CoA. The chain is Phosphate acyltransferase from Methylocella silvestris (strain DSM 15510 / CIP 108128 / LMG 27833 / NCIMB 13906 / BL2).